The sequence spans 630 residues: Chaperone protein HtpG (630 aa).

Residues 1 to 336 (MTTTVEQTAE…TADLPLNVSR (336 aa)) are a; substrate-binding. Residues 337-551 (EMIQESPILA…EDGYDRQMEK (215 aa)) are b. A c region spans residues 552–630 (ILQNAGRLQG…VFERSVRSEG (79 aa)).

This sequence belongs to the heat shock protein 90 family. Homodimer.

The protein resides in the cytoplasm. Functionally, molecular chaperone. Has ATPase activity. The sequence is that of Chaperone protein HtpG from Rhizobium etli (strain ATCC 51251 / DSM 11541 / JCM 21823 / NBRC 15573 / CFN 42).